The following is a 325-amino-acid chain: Phospholipid phosphatase-related protein type 1 (325 aa).

Residue N5 is glycosylated (N-linked (GlcNAc...) asparagine). The next 3 membrane-spanning stretches (helical) occupy residues 13–33, 67–87, and 127–147; these read IIPCFIFVELVIMAGTVLLAY, FISPLVLYCVLAATPTAIIFI, and FIGVFAFGLFATDIFVNAGQV. The N-linked (GlcNAc...) asparagine glycan is linked to N163. 3 consecutive transmembrane segments (helical) span residues 201–218, 230–247, and 257–277; these read AALSIYSALYATMYITST, VLCLGTLCTAFLTGLNRV, and VIAGFILGTAVALFLGMCVVH. Position 307 is a phosphoserine (S307). A glycan (N-linked (GlcNAc...) asparagine) is linked at N316.

The protein belongs to the PA-phosphatase related phosphoesterase family.

It is found in the cell membrane. The protein resides in the cell projection. Its subcellular location is the neuron projection. Its function is as follows. May play a role in neurite outgrowth and neurogenesis. The polypeptide is Phospholipid phosphatase-related protein type 1 (Mus musculus (Mouse)).